A 386-amino-acid polypeptide reads, in one-letter code: Formate-dependent phosphoribosylglycinamide formyltransferase (386 aa).

N(1)-(5-phospho-beta-D-ribosyl)glycinamide contacts are provided by residues 15 to 16 and glutamate 75; that span reads EL. ATP is bound by residues arginine 107, lysine 148, 153-158, 188-191, and glutamate 196; these read SSGKGQ and EQFI. One can recognise an ATP-grasp domain in the interval 112 to 301; the sequence is ALAAQQLNLQ…EFELHLRAIV (190 aa). Glutamate 260 and glutamate 272 together coordinate Mg(2+). Residues aspartate 279, lysine 349, and 356-357 contribute to the N(1)-(5-phospho-beta-D-ribosyl)glycinamide site; that span reads RR.

Belongs to the PurK/PurT family. In terms of assembly, homodimer.

The catalysed reaction is N(1)-(5-phospho-beta-D-ribosyl)glycinamide + formate + ATP = N(2)-formyl-N(1)-(5-phospho-beta-D-ribosyl)glycinamide + ADP + phosphate + H(+). Its pathway is purine metabolism; IMP biosynthesis via de novo pathway; N(2)-formyl-N(1)-(5-phospho-D-ribosyl)glycinamide from N(1)-(5-phospho-D-ribosyl)glycinamide (formate route): step 1/1. Functionally, involved in the de novo purine biosynthesis. Catalyzes the transfer of formate to 5-phospho-ribosyl-glycinamide (GAR), producing 5-phospho-ribosyl-N-formylglycinamide (FGAR). Formate is provided by PurU via hydrolysis of 10-formyl-tetrahydrofolate. The sequence is that of Formate-dependent phosphoribosylglycinamide formyltransferase from Francisella tularensis subsp. tularensis (strain WY96-3418).